A 584-amino-acid chain; its full sequence is AAA ATPase forming ring-shaped complexes (584 aa).

A coiled-coil region spans residues 10 to 96 (AQSGTEHAEQ…LKENLDAVTH (87 aa)). Residues 40–66 (HQLQSAQRHAAGLSERRRAAEAQTQTA) are disordered. 292–297 (GTGKTM) serves as a coordination point for ATP.

Belongs to the AAA ATPase family. As to quaternary structure, homohexamer. Assembles into a hexameric ring structure.

In Micrococcus luteus (strain ATCC 4698 / DSM 20030 / JCM 1464 / CCM 169 / CCUG 5858 / IAM 1056 / NBRC 3333 / NCIMB 9278 / NCTC 2665 / VKM Ac-2230) (Micrococcus lysodeikticus), this protein is AAA ATPase forming ring-shaped complexes.